Here is a 953-residue protein sequence, read N- to C-terminus: MTAAENVCYTLINVPMDSEPPSEISLKNDLEKGDVKSKTEALKKVIIMILNGEKLPGLLMTIIRFVLPLQDHTIKKLLLVFWEIVPKTTPDGRLLHEMILVCDAYRKDLQHPNEFIRGSTLRFLCKLKEAELLEPLMPAIRACLEHRHSYVRRNAVLAIYTIYRNFEHLIPDAPELIHDFLVNEKDASCKRNAFMMLIHADQDRALDYLSTCIDQVQTFGDILQLVIVELIYKVCHANPSERARFIRCIYNLLQSSSPAVKYEAAGTLVTLSSAPTAIKAAAQCYIDLIIKESDNNVKLIVLDRLIELKEHPAHERVLQDLVMDILRVLSTPDLEVRKKTLQLALDLVSSRNVEELVIVLKKEVIKTNNVSEHEDTDKYRQLLVRTLHSCSVRFPDMAANVIPVLMEFLSDSNEAAAADVLEFVREAIQRFDNLRMLIVEKMLEVFHAIKSVKIYRGALWILGEYCSTKEDIQSVMTEVRRSLGEIPIVESEIKKEAGELKPEEEITVGPVQKLVTKMGTYATQSALSSSRPTKKEEERPPLRGFLLDGDFFVAASLATTLTKIALRYVALVQEKKRQNSFVAEAMLLMATILHLGKSSPPKKPITDDDVDRISLCLKVLSECSPLMNDIFNKECRQSLSHMLSAKLEEEKLSQKKESEKRNVTVQPDDPISFMQLTAKNEMNCKEDQFQLSLLAAMGNTQRKEAADPLASKLNKVTQLTGFSDPVYAEAYVHVNQYDIVLDVLVVNQTSDTLQNCTLELATLGDLKLVEKPSPLTLAPHDFANIKANVKVASTENGIIFGNIVYDVSGAASDRNCVVLSDIHIDIMDYIQPATCTDAEFRQMWAEFEWENKVTVNTNIIDLNDYLQHILKSTNMKCLTPEKALSGYCGFMAANLYARSIFGEDALANVSIEKPIQQGPEAPVTGHIRIRAKGQGMALSLGDKINLSQKKTSI.

Position 2 is an N-acetylthreonine (Thr2). HEAT repeat units follow at residues 96–131 (HEMI…KEAE), 132–168 (LLEP…NFEH), 240–276 (SERA…SAPT), 277–314 (AIKA…HPAH), 316–353 (RVLQ…SRNV), and 396–433 (DMAA…RFDN). Lys494 bears the N6-acetyllysine mark.

In terms of assembly, oligomeric complex that consists of at least the alpha, beta, beta', gamma, delta, epsilon and zeta subunits. Interacts with CAPN8 and PRKCE. Interacts with SCYL1. Interacts with COPG1. Interacts with ARF1 (myristoylated); this interaction is required for binding of COPB1 to Golgi membranes. Interacts (via trunk domain) with ARF1 (via switch I region); the interaction is direct. Interacts with KCNK2 (via N-terminus); this interaction increases the channel-mediated whole cell currents and promotes plasma membrane expression of KCNK2. Interacts with STX17. Interacts with TMEM115. Interacts with TMEM41B. In terms of tissue distribution, high expression in the lung, kidney, skeletal muscle and small intestine, and lower level of expression in heart, liver, spleen, stomach and fat.

The protein resides in the cytoplasm. Its subcellular location is the golgi apparatus membrane. It is found in the cytoplasmic vesicle. It localises to the COPI-coated vesicle membrane. The protein localises to the cell membrane. The protein resides in the endoplasmic reticulum-Golgi intermediate compartment. The coatomer is a cytosolic protein complex that binds to dilysine motifs and reversibly associates with Golgi non-clathrin-coated vesicles, which further mediate biosynthetic protein transport from the ER, via the Golgi up to the trans Golgi network. Coatomer complex is required for budding from Golgi membranes, and is essential for the retrograde Golgi-to-ER transport of dilysine-tagged proteins. In mammals, the coatomer can only be recruited by membranes associated to ADP-ribosylation factors (ARFs), which are small GTP-binding proteins; the complex also influences the Golgi structural integrity, as well as the processing, activity, and endocytic recycling of LDL receptors. Plays a functional role in facilitating the transport of kappa-type opioid receptor mRNAs into axons and enhances translation of these proteins. Required for limiting lipid storage in lipid droplets. Involved in lipid homeostasis by regulating the presence of perilipin family members PLIN2 and PLIN3 at the lipid droplet surface and promoting the association of adipocyte surface triglyceride lipase (PNPLA2) with the lipid droplet to mediate lipolysis. Involved in the Golgi disassembly and reassembly processes during cell cycle. Involved in autophagy by playing a role in early endosome function. Plays a role in organellar compartmentalization of secretory compartments including endoplasmic reticulum (ER)-Golgi intermediate compartment (ERGIC), Golgi, trans-Golgi network (TGN) and recycling endosomes, and in biosynthetic transport of CAV1. This chain is Coatomer subunit beta, found in Sus scrofa (Pig).